A 186-amino-acid polypeptide reads, in one-letter code: MSVAEIRKSAETRMAKSLDTLKVNLSKIRTGRAHTGILDHVQVEYYGSPVPVSQVANVNLVDARTISVQPYEKPMAAAIEKAIRESDLGLNPMSLGDSIRVPMPALTEERRRDLTKVVKGEGEDAKIAVRNLRREANESLKKLVKDKEISEDDERRAQDDIQKLTDRNVTEIDKLITQKEAEIMTV.

The protein belongs to the RRF family.

It localises to the cytoplasm. Functionally, responsible for the release of ribosomes from messenger RNA at the termination of protein biosynthesis. May increase the efficiency of translation by recycling ribosomes from one round of translation to another. This is Ribosome-recycling factor from Bordetella petrii (strain ATCC BAA-461 / DSM 12804 / CCUG 43448).